The primary structure comprises 471 residues: Probable anion transporter 5, chloroplastic (471 aa).

The N-terminal 59 residues, 1–59 (MAASASASALQAERCLLVGVGAGPRRHRLPLRMPPPLHAPPALLLLPHRRRRRWPPAVR), are a transit peptide targeting the chloroplast. Residues 56–76 (PAVRASPGEGGGGGGGGGGGG) form a disordered region. 4 helical membrane passes run 62 to 82 (PGEG…AGAL), 103 to 123 (IGVV…GFMP), 162 to 182 (VVFG…PPII), and 185 to 205 (LGWE…CLGF). A compositionally biased stretch (gly residues) spans 63 to 76 (GEGGGGGGGGGGGG). Residues 226–247 (GQSPSGSSDLISSSVSPKSSES) form a disordered region. Residues 228-247 (SPSGSSDLISSSVSPKSSES) show a composition bias toward low complexity. 6 helical membrane passes run 270–290 (VWAM…CLSW), 307–327 (AWVS…AAPF), 348–368 (IAFL…GVPP), 371–391 (IVAF…GLYC), 403–423 (ILLG…VALT), and 435–455 (ISLF…WLAF).

The protein belongs to the major facilitator superfamily. Sodium/anion cotransporter (TC 2.A.1.14) family.

It is found in the plastid. The protein localises to the chloroplast membrane. Its function is as follows. Probable anion transporter. The chain is Probable anion transporter 5, chloroplastic (PHT4;5) from Oryza sativa subsp. japonica (Rice).